Here is a 20-residue protein sequence, read N- to C-terminus: Phospholipase A2 D5 (20 aa).

Requires Ca(2+) as cofactor. Post-translationally, contains seven disulfide bonds. Expressed by the venom gland.

Its subcellular location is the secreted. The catalysed reaction is a 1,2-diacyl-sn-glycero-3-phosphocholine + H2O = a 1-acyl-sn-glycero-3-phosphocholine + a fatty acid + H(+). Its function is as follows. PLA2 catalyzes the calcium-dependent hydrolysis of the 2-acyl groups in 3-sn-phosphoglycerides. This chain is Phospholipase A2 D5, found in Micrurus pyrrhocryptus (Coral snake).